A 206-amino-acid polypeptide reads, in one-letter code: IMPACT family member HI_0722 (206 aa).

This sequence belongs to the IMPACT family.

The protein is IMPACT family member HI_0722 of Haemophilus influenzae (strain ATCC 51907 / DSM 11121 / KW20 / Rd).